We begin with the raw amino-acid sequence, 339 residues long: Protein-glutamate methylesterase/protein-glutamine glutaminase (339 aa).

The region spanning 2 to 119 (RIGVVNDMPM…EGNASSQSAR (118 aa)) is the Response regulatory domain. 4-aspartylphosphate is present on aspartate 53. A CheB-type methylesterase domain is found at 149–338 (PTPRRLIAIG…SRIIEACERS (190 aa)). Active-site residues include serine 160, histidine 187, and aspartate 280.

It belongs to the CheB family. In terms of processing, phosphorylated by CheA. Phosphorylation of the N-terminal regulatory domain activates the methylesterase activity.

Its subcellular location is the cytoplasm. It catalyses the reaction [protein]-L-glutamate 5-O-methyl ester + H2O = L-glutamyl-[protein] + methanol + H(+). The catalysed reaction is L-glutaminyl-[protein] + H2O = L-glutamyl-[protein] + NH4(+). Its function is as follows. Involved in chemotaxis. Part of a chemotaxis signal transduction system that modulates chemotaxis in response to various stimuli. Catalyzes the demethylation of specific methylglutamate residues introduced into the chemoreceptors (methyl-accepting chemotaxis proteins or MCP) by CheR. Also mediates the irreversible deamidation of specific glutamine residues to glutamic acid. The chain is Protein-glutamate methylesterase/protein-glutamine glutaminase from Mesorhizobium japonicum (strain LMG 29417 / CECT 9101 / MAFF 303099) (Mesorhizobium loti (strain MAFF 303099)).